A 500-amino-acid chain; its full sequence is Probable cytosol aminopeptidase (500 aa).

The Mn(2+) site is built by lysine 264 and aspartate 269. Lysine 276 is an active-site residue. Residues aspartate 287, aspartate 346, and glutamate 348 each contribute to the Mn(2+) site. Arginine 350 is a catalytic residue.

This sequence belongs to the peptidase M17 family. Mn(2+) is required as a cofactor.

It localises to the cytoplasm. The enzyme catalyses Release of an N-terminal amino acid, Xaa-|-Yaa-, in which Xaa is preferably Leu, but may be other amino acids including Pro although not Arg or Lys, and Yaa may be Pro. Amino acid amides and methyl esters are also readily hydrolyzed, but rates on arylamides are exceedingly low.. It catalyses the reaction Release of an N-terminal amino acid, preferentially leucine, but not glutamic or aspartic acids.. Functionally, presumably involved in the processing and regular turnover of intracellular proteins. Catalyzes the removal of unsubstituted N-terminal amino acids from various peptides. The polypeptide is Probable cytosol aminopeptidase (Rhodopseudomonas palustris (strain TIE-1)).